The sequence spans 511 residues: 4,4'-diapophytoene desaturase (4,4'-diapolycopene-forming) (511 aa).

The protein belongs to the carotenoid/retinoid oxidoreductase family.

It catalyses the reaction 15-cis-4,4'-diapophytoene + 4 FAD + 4 H(+) = all-trans-4,4'-diapolycopene + 4 FADH2. The protein operates within carotenoid biosynthesis. Involved in the biosynthesis of C30 carotenoids. Catalyzes four successive dehydrogenation reactions that lead to the introduction of four double bonds into 4,4'-diapophytoene (dehydrosqualene) to yield 4,4'-diapolycopene. This Methylomonas sp protein is 4,4'-diapophytoene desaturase (4,4'-diapolycopene-forming).